The primary structure comprises 288 residues: Polyamine aminopropyltransferase (288 aa).

Residues 9-238 (ETLHDQFGQY…GIMTFAWATD (230 aa)) enclose the PABS domain. Gln33 lines the S-methyl-5'-thioadenosine pocket. Positions 64 and 88 each coordinate spermidine. S-methyl-5'-thioadenosine contacts are provided by residues Glu108 and 140–141 (DG). The active-site Proton acceptor is Asp158. 158–161 (DCTD) serves as a coordination point for spermidine. Residue Pro165 participates in S-methyl-5'-thioadenosine binding.

It belongs to the spermidine/spermine synthase family. Homodimer or homotetramer.

Its subcellular location is the cytoplasm. It carries out the reaction S-adenosyl 3-(methylsulfanyl)propylamine + putrescine = S-methyl-5'-thioadenosine + spermidine + H(+). It participates in amine and polyamine biosynthesis; spermidine biosynthesis; spermidine from putrescine: step 1/1. In terms of biological role, catalyzes the irreversible transfer of a propylamine group from the amino donor S-adenosylmethioninamine (decarboxy-AdoMet) to putrescine (1,4-diaminobutane) to yield spermidine. The polypeptide is Polyamine aminopropyltransferase (Shigella boydii serotype 4 (strain Sb227)).